A 182-amino-acid polypeptide reads, in one-letter code: MSPIIAPPAELVDPKDRVQLRRVFGDFPTGVTVVTVGGSEPRGMTANSFTSVSLSPPLVLICVGKDAVMHQRLTALPTFAVSVLEAGQEKAARHFADHSRPPGVDQFDTVDWVLGEESGAPLIAGAVAHLECAIHRLYEGGDHTIFLGEVITATRWPAREGMLFSGGRFRRFAPDADEGRAA.

D16 serves as a coordination point for NAD(+). FAD is bound by residues 47–48 (NS), 62–64 (CVG), and H98. H143 is an NAD(+) binding site.

It belongs to the non-flavoprotein flavin reductase family. Homodimer.

The enzyme catalyses FADH2 + NAD(+) = FAD + NADH + 2 H(+). It functions in the pathway antibiotic biosynthesis. The SgcE6-SgcC hydroxylation activity decreases in the presence of excess FAD. Reductase component of a two-component system involved in the biosynthesis of the enediyne antitumor antibiotic C-1027. SgcE6 provides the FADH(2) required by both the halogenase SgcC3 and the monooxygenase SgcC through free diffusion. Accepts only NADH and FAD as substrates. This is NADH-dependent FAD reductase from Streptomyces globisporus.